Reading from the N-terminus, the 263-residue chain is Acyl-[acyl-carrier-protein]--UDP-N-acetylglucosamine O-acyltransferase (263 aa).

It belongs to the transferase hexapeptide repeat family. LpxA subfamily. As to quaternary structure, homotrimer.

The protein resides in the cytoplasm. It carries out the reaction a (3R)-hydroxyacyl-[ACP] + UDP-N-acetyl-alpha-D-glucosamine = a UDP-3-O-[(3R)-3-hydroxyacyl]-N-acetyl-alpha-D-glucosamine + holo-[ACP]. Its pathway is glycolipid biosynthesis; lipid IV(A) biosynthesis; lipid IV(A) from (3R)-3-hydroxytetradecanoyl-[acyl-carrier-protein] and UDP-N-acetyl-alpha-D-glucosamine: step 1/6. In terms of biological role, involved in the biosynthesis of lipid A, a phosphorylated glycolipid that anchors the lipopolysaccharide to the outer membrane of the cell. This is Acyl-[acyl-carrier-protein]--UDP-N-acetylglucosamine O-acyltransferase from Xanthomonas oryzae pv. oryzae (strain PXO99A).